Consider the following 230-residue polypeptide: Uracil-DNA glycosylase (230 aa).

D70 functions as the Proton acceptor in the catalytic mechanism.

The protein belongs to the uracil-DNA glycosylase (UDG) superfamily. UNG family.

It is found in the cytoplasm. It catalyses the reaction Hydrolyzes single-stranded DNA or mismatched double-stranded DNA and polynucleotides, releasing free uracil.. Functionally, excises uracil residues from the DNA which can arise as a result of misincorporation of dUMP residues by DNA polymerase or due to deamination of cytosine. The sequence is that of Uracil-DNA glycosylase from Pseudomonas entomophila (strain L48).